The sequence spans 284 residues: Bifunctional protein FolD 1 (284 aa).

NADP(+) contacts are provided by residues 166–168 and Ile-232; that span reads GAS.

Belongs to the tetrahydrofolate dehydrogenase/cyclohydrolase family. As to quaternary structure, homodimer.

It catalyses the reaction (6R)-5,10-methylene-5,6,7,8-tetrahydrofolate + NADP(+) = (6R)-5,10-methenyltetrahydrofolate + NADPH. The catalysed reaction is (6R)-5,10-methenyltetrahydrofolate + H2O = (6R)-10-formyltetrahydrofolate + H(+). The protein operates within one-carbon metabolism; tetrahydrofolate interconversion. Catalyzes the oxidation of 5,10-methylenetetrahydrofolate to 5,10-methenyltetrahydrofolate and then the hydrolysis of 5,10-methenyltetrahydrofolate to 10-formyltetrahydrofolate. The polypeptide is Bifunctional protein FolD 1 (Ectopseudomonas mendocina (strain ymp) (Pseudomonas mendocina)).